A 268-amino-acid polypeptide reads, in one-letter code: NAC domain-containing protein 41 (268 aa).

One can recognise an NAC domain in the interval 15–160 (LPPGFRFHPT…NWVLCRVFLK (146 aa)). The DNA-binding element occupies 109–166 (VGMKKTLVFYKGKPPNGTRTNWVLHEYRLVDSQQDSLYGQNMNWVLCRVFLKKRSNSN). The disordered stretch occupies residues 166-190 (NSKRKEDEKEEVENEKETETERERE). A compositionally biased stretch (basic and acidic residues) spans 180–190 (EKETETERERE).

Its subcellular location is the nucleus. Its function is as follows. Transcription activator of the mannan synthase CSLA9. Recognizes and binds to DNA-specific sequence of CSLA9 promoter. This Arabidopsis thaliana (Mouse-ear cress) protein is NAC domain-containing protein 41.